Consider the following 399-residue polypeptide: Elongation factor Tu (399 aa).

Residues 10 to 204 (KPHVNIGTIG…AVDSSIPEPE (195 aa)) form the tr-type G domain. The G1 stretch occupies residues 19–26 (GHVDHGKT). 19–26 (GHVDHGKT) serves as a coordination point for GTP. Position 26 (Thr-26) interacts with Mg(2+). The interval 60 to 64 (GITIN) is G2. The G3 stretch occupies residues 81-84 (DCPG). GTP-binding positions include 81–85 (DCPGH) and 136–139 (NKCD). The G4 stretch occupies residues 136-139 (NKCD). Positions 174–176 (SGL) are G5.

It belongs to the TRAFAC class translation factor GTPase superfamily. Classic translation factor GTPase family. EF-Tu/EF-1A subfamily. In terms of assembly, monomer.

The protein localises to the cytoplasm. It catalyses the reaction GTP + H2O = GDP + phosphate + H(+). In terms of biological role, GTP hydrolase that promotes the GTP-dependent binding of aminoacyl-tRNA to the A-site of ribosomes during protein biosynthesis. This is Elongation factor Tu from Synechococcus sp. (strain CC9605).